Here is a 521-residue protein sequence, read N- to C-terminus: Organic cation/carnitine transporter 6 (521 aa).

Over 1 to 37 the chain is Cytoplasmic; the sequence is MADPISEPLLSHLTDDSGVNEKTRLEALTFDKIVEQS. The helical transmembrane segment at 38 to 58 threads the bilayer; that stretch reads LSDFGFWQFFQISLVGLALLF. Topologically, residues 59–123 are extracellular; that stretch reads DAQQIFITVY…GLECSSSLLR (65 aa). A glycan (N-linked (GlcNAc...) asparagine) is linked at Asn79. A helical membrane pass occupies residues 124-144; the sequence is GMPSSAFYIGAIVGGFFLALI. At 145 to 154 the chain is on the cytoplasmic side; sequence PDDSLGRKKL. A helical transmembrane segment spans residues 155–177; it reads VLFSTFAMSITSISVIFSTNVWI. The Extracellular portion of the chain corresponds to 178-182; the sequence is YTFLK. The chain crosses the membrane as a helical span at residues 183–200; the sequence is FIIGFSRSQTWSYALVLI. ATP is bound at residue 200-207; that stretch reads ISERVSTR. The Cytoplasmic segment spans residues 201 to 213; sequence SERVSTRWRPRAT. The chain crosses the membrane as a helical span at residues 214 to 234; sequence MIPFTLFVLGFMSLSGIAFLA. Residues 235 to 241 are Extracellular-facing; that stretch reads QDSSWRY. A helical membrane pass occupies residues 242 to 262; the sequence is LYLYTSVPAVFYCIFLYLFAL. The Cytoplasmic segment spans residues 263-326; the sequence is ESPRWLHMQG…FFFRKWAFRR (64 aa). The helical transmembrane segment at 327–347 threads the bilayer; sequence ILVVMIIMFGLGISYYGVPLA. Topologically, residues 348–356 are extracellular; that stretch reads ARDIDVNIY. Residues 357 to 377 traverse the membrane as a helical segment; it reads LSETLNALVELPTFVITPILL. The Cytoplasmic segment spans residues 378–385; it reads ERFNRRSS. A helical transmembrane segment spans residues 386 to 406; that stretch reads VLVNTLLGGASGVLCFVLSIL. Residues 407 to 412 are Extracellular-facing; sequence GKTEIA. Residues 413–433 form a helical membrane-spanning segment; it reads FAFELGTFFCARIGFNLMAVF. Over 434–447 the chain is Cytoplasmic; that stretch reads MVEMFPTCVRSSAT. A helical membrane pass occupies residues 448-468; that stretch reads MMFRQALVVGGACCPLIASIG. Residues 469 to 473 lie on the Extracellular side of the membrane; the sequence is RYIPS. The helical transmembrane segment at 474–494 threads the bilayer; the sequence is VSFAIFGIAMSGLGMFVLILP. At 495-521 the chain is on the cytoplasmic side; the sequence is ETKGLSLCDSMEEQEKRDQAVNTSHVC.

This sequence belongs to the major facilitator (TC 2.A.1) superfamily. Organic cation transporter (TC 2.A.1.19) family. As to expression, expressed in roots and stems. In the stem of secondary inflorescences, localized to the phloem. Also present in flowers, specifically in the stamen, in the filaments and the connective, and restricted to major veins in leaves.

The protein localises to the vacuole membrane. In terms of biological role, high affinity carnitine transporter involved in the active cellular uptake of carnitine. Also transports organic cations. In Arabidopsis thaliana (Mouse-ear cress), this protein is Organic cation/carnitine transporter 6 (OCT6).